Consider the following 149-residue polypeptide: Large ribosomal subunit protein bL9 (149 aa).

Belongs to the bacterial ribosomal protein bL9 family.

Functionally, binds to the 23S rRNA. In Campylobacter curvus (strain 525.92), this protein is Large ribosomal subunit protein bL9.